Reading from the N-terminus, the 397-residue chain is Lysophospholipid transporter LplT (397 aa).

Residues 1–17 (MSESVHTNTSLWSKGMK) are Periplasmic-facing. The helical transmembrane segment at 18–38 (AVIVAQFLSAFGDNALLFATL) threads the bilayer. The Cytoplasmic segment spans residues 39–52 (ALLNAQFYPEWSQP). Residues 53 to 73 (ILQMVFVGAYILFAPFVGQVA) form a helical membrane-spanning segment. The Periplasmic portion of the chain corresponds to 74–90 (DSFAKGRVMMFANGLKL). The helical transmembrane segment at 91-111 (LGAASICFGINPFLGYTLVGV) threads the bilayer. Residues 112 to 144 (GAAAYSPAKYGILGELTTGSKLVKANGLMEAST) are Cytoplasmic-facing. A helical transmembrane segment spans residues 145–165 (IAAILLGSVAGGVLADWHVLV). A topological domain (periplasmic) is located at residue Ala166. Residues 167-187 (LAACALAYGGAVVANIYIPKL) traverse the membrane as a helical segment. The Cytoplasmic portion of the chain corresponds to 188–226 (AAARPGQSWNLINMTRSFLNACTSLWRNGETRFSLVGTS). Residues 227–247 (LFWGAGVTLRFLLVLWVPVAL) form a helical membrane-spanning segment. Topologically, residues 248–256 (GITDNATPT) are periplasmic. A helical membrane pass occupies residues 257–277 (YLNAMVAIGIVVGAGAAAKLV). The Cytoplasmic segment spans residues 278–280 (TLE). The chain crosses the membrane as a helical span at residues 281 to 301 (TVSRCMPAGILIGVVVLIFSL). Over 302–304 (QHE) the chain is Periplasmic. Residues 305–325 (LLPAYALLMLIGVMGGFFVVP) form a helical membrane-spanning segment. The Cytoplasmic portion of the chain corresponds to 326-343 (LNALLQERGKKSVGAGNA). Residues 344–364 (IAVQNLGENSAMLLMLGIYSL) traverse the membrane as a helical segment. Residues 365–366 (AV) lie on the Periplasmic side of the membrane. Residues 367 to 387 (MIGIPVVPIGIGFGALFALAI) form a helical membrane-spanning segment. Residues 388–397 (TALWIWQRRH) lie on the Cytoplasmic side of the membrane.

This sequence belongs to the major facilitator superfamily. LplT (TC 2.A.1.42) family.

Its subcellular location is the cell inner membrane. Catalyzes the facilitated diffusion of 2-acyl-glycero-3-phosphoethanolamine (2-acyl-GPE) into the cell. In Escherichia coli (strain SE11), this protein is Lysophospholipid transporter LplT.